The following is an 884-amino-acid chain: Protein P (884 aa).

The segment at 1–184 is terminal protein domain (TP); sequence MHPFSRLFRN…GKPYSWEHRQ (184 aa). The tract at residues 185–387 is spacer; it reads LVQHNGQQHK…YCIHHIVSSL (203 aa). Disordered stretches follow at residues 218 to 241 and 299 to 345; these read PSEP…QKST and RNSG…DFSS. 2 stretches are compositionally biased toward polar residues: residues 222-241 and 323-332; these read VSVS…QKST and YSSNSTSQRY. Positions 388–729 are polymerase/reverse transcriptase domain (RT); it reads DDWGPCTVTG…YEELWPVVRQ (342 aa). A Reverse transcriptase domain is found at 398 to 639; it reads DVTIKSPRTP…NHLHFMGYVI (242 aa). Asp-470, Asp-590, and Asp-591 together coordinate Mg(2+).

Belongs to the hepadnaviridae P protein family.

It catalyses the reaction DNA(n) + a 2'-deoxyribonucleoside 5'-triphosphate = DNA(n+1) + diphosphate. The enzyme catalyses Endonucleolytic cleavage to 5'-phosphomonoester.. Its activity is regulated as follows. Activated by host HSP70 and HSP40 in vitro to be able to bind the epsilon loop of the pgRNA. Because deletion of the RNase H region renders the protein partly chaperone-independent, the chaperones may be needed indirectly to relieve occlusion of the RNA-binding site by this domain. Inhibited by several reverse-transcriptase inhibitors: Lamivudine, Adefovir and Entecavir. Its function is as follows. Multifunctional enzyme that converts the viral RNA genome into dsDNA in viral cytoplasmic capsids. This enzyme displays a DNA polymerase activity that can copy either DNA or RNA templates, and a ribonuclease H (RNase H) activity that cleaves the RNA strand of RNA-DNA heteroduplexes in a partially processive 3'- to 5'-endonucleasic mode. Neo-synthesized pregenomic RNA (pgRNA) are encapsidated together with the P protein, and reverse-transcribed inside the nucleocapsid. Initiation of reverse-transcription occurs first by binding the epsilon loop on the pgRNA genome, and is initiated by protein priming, thereby the 5'-end of (-)DNA is covalently linked to P protein. Partial (+)DNA is synthesized from the (-)DNA template and generates the relaxed circular DNA (RC-DNA) genome. After budding and infection, the RC-DNA migrates in the nucleus, and is converted into a plasmid-like covalently closed circular DNA (cccDNA). The activity of P protein does not seem to be necessary for cccDNA generation, and is presumably released from (+)DNA by host nuclear DNA repair machinery. This Marmota monax (Woodchuck) protein is Protein P.